The chain runs to 254 residues: RNA polymerase sigma-D factor (254 aa).

The Polymerase core binding signature appears at 54 to 67; the sequence is DLMSLGMLGLYDAL. A DNA-binding region (H-T-H motif) is located at residues 220-239; that stretch reads LTEIGQVLNLSTSRISQIHS.

Monomer. Interacts transiently with the RNAP core.

Its function is as follows. Sigma factors are initiation factors that promote the attachment of RNA polymerase (RNAP) to specific initiation sites and are then released. This alternative sigma factor is required for the transcription of the flagellin and motility genes as well as for wild-type chemotaxis. Associates with the RNAP core during all growth phases with a peak at the transition to stationary phase. The protein is RNA polymerase sigma-D factor (sigD) of Bacillus subtilis (strain 168).